A 166-amino-acid chain; its full sequence is Dihydrofolate reductase (166 aa).

Positions 6 to 164 constitute a DHFR domain; sequence KISLIVAMDK…YDYYFHIYER (159 aa). 10–12 lines the substrate pocket; sequence IVA. Residues 11–12 and 19–24 each bind NADP(+); these read VA and IGKDND. Residue Asp32 coordinates substrate. 48 to 51 contributes to the NADP(+) binding site; that stretch reads GRKN. Arg62 contacts substrate. NADP(+) is bound by residues 67–70 and 100–105; these read LTRD and FGGEQI. Thr119 contributes to the substrate binding site.

This sequence belongs to the dihydrofolate reductase family.

The enzyme catalyses (6S)-5,6,7,8-tetrahydrofolate + NADP(+) = 7,8-dihydrofolate + NADPH + H(+). Its pathway is cofactor biosynthesis; tetrahydrofolate biosynthesis; 5,6,7,8-tetrahydrofolate from 7,8-dihydrofolate: step 1/1. Key enzyme in folate metabolism. Catalyzes an essential reaction for de novo glycine and purine synthesis, and for DNA precursor synthesis. The polypeptide is Dihydrofolate reductase (dfrD) (Staphylococcus haemolyticus).